We begin with the raw amino-acid sequence, 354 residues long: 3-dehydroquinate synthase (354 aa).

NAD(+) is bound by residues aspartate 39, tyrosine 45, 68–71, 100–104, 124–125, lysine 136, lysine 145, and 163–166; these read EKTK, GATGD, TT, and FLKT. Residues glutamate 178, histidine 242, and histidine 256 each contribute to the Zn(2+) site.

It belongs to the sugar phosphate cyclases superfamily. Dehydroquinate synthase family. Requires NAD(+) as cofactor. Co(2+) serves as cofactor. The cofactor is Zn(2+).

The protein resides in the cytoplasm. It catalyses the reaction 7-phospho-2-dehydro-3-deoxy-D-arabino-heptonate = 3-dehydroquinate + phosphate. It participates in metabolic intermediate biosynthesis; chorismate biosynthesis; chorismate from D-erythrose 4-phosphate and phosphoenolpyruvate: step 2/7. Functionally, catalyzes the conversion of 3-deoxy-D-arabino-heptulosonate 7-phosphate (DAHP) to dehydroquinate (DHQ). The polypeptide is 3-dehydroquinate synthase (Staphylococcus aureus (strain MRSA252)).